We begin with the raw amino-acid sequence, 615 residues long: Chaperone protein HscA homolog (615 aa).

Belongs to the heat shock protein 70 family.

In terms of biological role, chaperone involved in the maturation of iron-sulfur cluster-containing proteins. Has a low intrinsic ATPase activity which is markedly stimulated by HscB. The polypeptide is Chaperone protein HscA homolog (Aeromonas hydrophila subsp. hydrophila (strain ATCC 7966 / DSM 30187 / BCRC 13018 / CCUG 14551 / JCM 1027 / KCTC 2358 / NCIMB 9240 / NCTC 8049)).